A 316-amino-acid chain; its full sequence is SHC-transforming protein homolog 1 (316 aa).

The PID domain occupies 16-158 (GVSLSATYLG…LIDVLTTAIN (143 aa)). The region spanning 211–307 (WYHGNLSRED…ETSLNLIRPV (97 aa)) is the SH2 domain. The disordered stretch occupies residues 292–316 (SEGRDRETSLNLIRPVPCPGSDDIE).

Interacts (via PID domain) with daf-2 (via cytoplasmic domain). Interacts with mek-1; the interaction is independent of mek-1 catalytic activity and is constitutive. Interacts (via N-terminus) with mlk-1 (via NPQY motif when phosphorylated on tyrosine residue). Does not interact with jkk-1 or sek-1. Interacts (via SH2 domain) with svh-2. Interacts with svh-4. In terms of tissue distribution, expressed in hypodermis, intestine, head and tail neurons, pharynx, gonads, vulva and body muscles.

Its subcellular location is the cytoplasm. It is found in the nucleus. The protein resides in the cell membrane. Its function is as follows. Scaffold protein which plays an important role in the activation of the JNK pathway composed of mlk-1, mek-1 and kgb-1; by bringing together mek-1 and mlk-1, promotes mlk-1-mediated phosphorylation and activation of mek-1 which in turn phosphorylates kgb-1. In addition, negatively modulates the activation of the insulin/IGF-1-like signaling (IIS) probably by inhibiting the insulin receptor daf-2. Positively regulates the activity of the transcription factor daf-16/FOXO by both inhibiting IIS and activating the JNK pathway. Plays a role in maintaining gonadal basement membrane integrity through activation of the JNK pathway components mek-1 and jnk-1. Involved in the response to several environmental stresses including heavy metal ions (Cu(2+) and Cd(2+)), heat, oxidative and protein misfolding (ER) stresses. Plays a role in gonad and germline development following the L1 diapause. Plays a role in life span and egg laying. Plays a role in axon regeneration after injury. In Caenorhabditis elegans, this protein is SHC-transforming protein homolog 1.